Reading from the N-terminus, the 386-residue chain is DNA-directed RNA polymerase subunit Rpo1C (386 aa).

This sequence belongs to the RNA polymerase beta' chain family. Part of the RNA polymerase complex.

Its subcellular location is the cytoplasm. It catalyses the reaction RNA(n) + a ribonucleoside 5'-triphosphate = RNA(n+1) + diphosphate. Functionally, DNA-dependent RNA polymerase (RNAP) catalyzes the transcription of DNA into RNA using the four ribonucleoside triphosphates as substrates. Forms part of the jaw domain. The chain is DNA-directed RNA polymerase subunit Rpo1C from Methanococcus maripaludis (strain DSM 14266 / JCM 13030 / NBRC 101832 / S2 / LL).